Consider the following 388-residue polypeptide: Putative nickel insertion protein (388 aa).

It belongs to the LarC family.

In Syntrophobacter fumaroxidans (strain DSM 10017 / MPOB), this protein is Putative nickel insertion protein.